Consider the following 422-residue polypeptide: UDP-N-acetylglucosamine 1-carboxyvinyltransferase (422 aa).

Residue 22–23 (KN) coordinates phosphoenolpyruvate. Arg93 contacts UDP-N-acetyl-alpha-D-glucosamine. Cys117 serves as the catalytic Proton donor. The residue at position 117 (Cys117) is a 2-(S-cysteinyl)pyruvic acid O-phosphothioketal. UDP-N-acetyl-alpha-D-glucosamine-binding positions include 122-126 (RPVDL), Asp308, and Leu330.

It belongs to the EPSP synthase family. MurA subfamily.

The protein localises to the cytoplasm. The catalysed reaction is phosphoenolpyruvate + UDP-N-acetyl-alpha-D-glucosamine = UDP-N-acetyl-3-O-(1-carboxyvinyl)-alpha-D-glucosamine + phosphate. It participates in cell wall biogenesis; peptidoglycan biosynthesis. In terms of biological role, cell wall formation. Adds enolpyruvyl to UDP-N-acetylglucosamine. This is UDP-N-acetylglucosamine 1-carboxyvinyltransferase from Helicobacter pylori (strain HPAG1).